Reading from the N-terminus, the 279-residue chain is MKTIMLCAICSVTQGNCVEDCAYCTQSAKAGADITKFKEKSVQQVVDEAKMAYKNHALGFCLVTSGARLNDKKTDYIASLARAVHKEVPNLMLIACNGMATYEQLCELKNAGIFSYNHNLETSREYFPKICTTHSWDERYQTNLDAKRAGLMLCTGGIYGVGESEADRVSFRASLKELEPFSSPINFFIRSDALRLDQPPLSADEALKIVRETKSALPETRVMIAGGREKILGERQYEIFENGADAIVIGDYLTAKGEKASKDIEELTKRGFSFASICH.

One can recognise a Radical SAM core domain in the interval Lys-2–Arg-228. [4Fe-4S] cluster contacts are provided by Cys-17, Cys-21, and Cys-24. 4 residues coordinate [2Fe-2S] cluster: Cys-61, Cys-96, Cys-154, and Arg-221.

The protein belongs to the radical SAM superfamily. Biotin synthase family. In terms of assembly, homodimer. It depends on [4Fe-4S] cluster as a cofactor. The cofactor is [2Fe-2S] cluster.

The catalysed reaction is (4R,5S)-dethiobiotin + (sulfur carrier)-SH + 2 reduced [2Fe-2S]-[ferredoxin] + 2 S-adenosyl-L-methionine = (sulfur carrier)-H + biotin + 2 5'-deoxyadenosine + 2 L-methionine + 2 oxidized [2Fe-2S]-[ferredoxin]. Its pathway is cofactor biosynthesis; biotin biosynthesis; biotin from 7,8-diaminononanoate: step 2/2. Its function is as follows. Catalyzes the conversion of dethiobiotin (DTB) to biotin by the insertion of a sulfur atom into dethiobiotin via a radical-based mechanism. In Campylobacter concisus (strain 13826), this protein is Biotin synthase.